The primary structure comprises 652 residues: ATP-binding cassette sub-family G member 5 (652 aa).

Residues M1–L25 form a disordered region. Residues M1 to K384 are Cytoplasmic-facing. Positions L39–E294 constitute an ABC transporter domain. Residue C61 is the site of S-palmitoyl cysteine attachment. G87–T94 contributes to the ATP binding site. The chain crosses the membrane as a helical span at residues Q385–L405. An ABC transmembrane type-2 domain is found at M389–R646. Over L406–G422 the chain is Extracellular. A glycan (N-linked (GlcNAc...) asparagine) is linked at N410. Residues L423–F443 form a helical membrane-spanning segment. Over P444–Y468 the chain is Cytoplasmic. Residues V469 to T490 form a helical membrane-spanning segment. Residues L491–G501 lie on the Extracellular side of the membrane. Residues Y502–L522 form a helical membrane-spanning segment. The Cytoplasmic portion of the chain corresponds to G523 to N529. A helical membrane pass occupies residues I530–I550. At R551–N624 the chain is on the extracellular side. N-linked (GlcNAc...) asparagine glycans are attached at residues N585 and N592. A helical transmembrane segment spans residues F625–V645. The Cytoplasmic portion of the chain corresponds to R646–R652.

Belongs to the ABC transporter superfamily. ABCG family. Eye pigment precursor importer (TC 3.A.1.204) subfamily. Heterodimer with ABCG8. Requires Mg(2+) as cofactor. N-glycosylated. N-glycosylation is important for efficient export out of the endoplasmic reticulum. In terms of tissue distribution, detected in liver and jejunum. Detected on enterocyte villi (at protein level). Expressed in jejunum, ileum and, at lower level, in the liver.

It is found in the cell membrane. It localises to the apical cell membrane. It carries out the reaction cholesterol(in) + ATP + H2O = cholesterol(out) + ADP + phosphate + H(+). The catalysed reaction is sitosterol(in) + ATP + H2O = sitosterol(out) + ADP + phosphate + H(+). With respect to regulation, cholesterol transport is inhibited by vanadate and by beryllium fluoride. ABCG5 and ABCG8 form an obligate heterodimer that mediates Mg(2+)- and ATP-dependent sterol transport across the cell membrane. Plays an essential role in the selective transport of dietary plant sterols and cholesterol in and out of the enterocytes and in the selective sterol excretion by the liver into bile. Required for normal sterol homeostasis. The heterodimer with ABCG8 has ATPase activity. The polypeptide is ATP-binding cassette sub-family G member 5 (Mus musculus (Mouse)).